A 185-amino-acid chain; its full sequence is HTH-type transcriptional regulator SA2364 (185 aa).

In terms of domain architecture, HTH tetR-type spans 6-66 (KENRQRIEEI…YVIQRDLDIF (61 aa)). The segment at residues 29–48 (SMNRIAKELGIGMGTLYRHF) is a DNA-binding region (H-T-H motif).

This is HTH-type transcriptional regulator SA2364 from Staphylococcus aureus (strain N315).